The following is a 413-amino-acid chain: Argininosuccinate synthase (413 aa).

A22–S30 contributes to the ATP binding site. Y100 and S105 together coordinate L-citrulline. Residue G130 coordinates ATP. Positions 132, 136, and 137 each coordinate L-aspartate. L-citrulline is bound at residue N136. R140, S189, S198, E274, and Y286 together coordinate L-citrulline.

The protein belongs to the argininosuccinate synthase family. Type 1 subfamily. As to quaternary structure, homotetramer.

Its subcellular location is the cytoplasm. It carries out the reaction L-citrulline + L-aspartate + ATP = 2-(N(omega)-L-arginino)succinate + AMP + diphosphate + H(+). The protein operates within amino-acid biosynthesis; L-arginine biosynthesis; L-arginine from L-ornithine and carbamoyl phosphate: step 2/3. The polypeptide is Argininosuccinate synthase (Endomicrobium trichonymphae).